The sequence spans 1473 residues: Collagen alpha-1(XVII) chain (1473 aa).

The segment covering 1 to 19 has biased composition (basic and acidic residues); that stretch reads MDITQKNKRDGTEVTERII. Disordered regions lie at residues 1-155 and 168-188; these read MDIT…PSTR and GSRS…PIPK. The Cytoplasmic segment spans residues 1-474; sequence MDITQKNKRD…CGSWCSWWKW (474 aa). Positions 1 to 572 are nonhelical region (NC16); sequence MDITQKNKRD…MTEQENGNLR (572 aa). 3 stretches are compositionally biased toward polar residues: residues 57 to 96, 111 to 120, and 170 to 184; these read LTHG…SPGS, EGSSSGNSSP, and RSAS…SNTL. The interval 146–231 is necessary for interaction with DST and for the recruitment of DST to hemidesmosome; sequence RLQSASPSTR…WSSTLPAGSS (86 aa). Residues 475 to 495 form a helical; Signal-anchor for type II membrane protein membrane-spanning segment; the sequence is LLGLLLTWLLLLGLLFGLIAL. At 496 to 1473 the chain is on the extracellular side; sequence AEEVRKLKAR…RRRRSIAVKP (978 aa). Disordered stretches follow at residues 567 to 1017, 1173 to 1234, and 1261 to 1308; these read ENGN…LSSS, FRGI…ISGA, and SFIV…SSMG. Positions 573–1459 are triple-helical region; it reads GSPGPKGDMG…KGEKGDKGDQ (887 aa). Composition is skewed to low complexity over residues 619 to 638, 667 to 678, 729 to 742, and 769 to 790; these read EPGM…MGPR, PGSVGPKGSIGP, EPGA…AGPD, and PGKP…PGRP. Pro residues predominate over residues 814–835; sequence PGPPGPPGAMGPPGPPGAPGPV. 2 stretches are compositionally biased toward low complexity: residues 837-847 and 854-866; these read PAGLPGQQGPR and GESF…SFSE. Pro residues-rich tracts occupy residues 878 to 899 and 913 to 922; these read PPGP…PGPP and PPGPPGPPGP. Residues 940–957 show a composition bias toward low complexity; the sequence is FPGLSGSGSSSLGLNLQG. Composition is skewed to pro residues over residues 1001–1011 and 1179–1188; these read PPGPPGPPGPP and PPGPPGPPGL. Residues 1198–1210 are compositionally biased toward polar residues; that stretch reads TEDLSSYLQTAGL. Composition is skewed to pro residues over residues 1214 to 1228 and 1266 to 1275; these read PGPP…PRGP and PPGPPGPQGP. Low complexity predominate over residues 1283–1307; sequence STDSSYSRSGSSSSFSRDTSYSSSM. N1404 carries an N-linked (GlcNAc...) asparagine glycan. Residues 1417–1473 form a disordered region; it reads GAIPGPPGQKGEMGIPGPKGERGPAGPPGPRGHKGEKGDKGDQFYIGRRRRSIAVKP. The segment covering 1449-1458 has biased composition (basic and acidic residues); that stretch reads HKGEKGDKGD. The interval 1460–1473 is nonhelical region (NC1); that stretch reads FYIGRRRRSIAVKP. The span at 1463–1473 shows a compositional bias: basic residues; sequence GRRRRSIAVKP.

In terms of assembly, homotrimers of alpha 1(XVII)chains. Interacts (via cytoplasmic region) with ITGB4 (via cytoplasmic region). Interacts (via cytoplasmic region) with DST (via N-terminus). Interacts (via N-terminus) with PLEC. Interacts (via cytoplasmic region) with DSP. The intracellular/endo domain is disulfide-linked. Post-translationally, prolines at the third position of the tripeptide repeating unit (G-X-Y) are hydroxylated in some or all of the chains. In terms of processing, the ectodomain is shedded from the surface of keratinocytes resulting in a 120-kDa soluble form, also named as 120 kDa linear IgA disease antigen homolog. The shedding is mediated by membrane-bound metalloproteases.

It is found in the cell junction. Its subcellular location is the hemidesmosome. The protein resides in the membrane. It localises to the secreted. The protein localises to the extracellular space. It is found in the extracellular matrix. Its subcellular location is the basement membrane. May play a role in the integrity of hemidesmosome and the attachment of basal keratinocytes to the underlying basement membrane. Functionally, the 120 kDa linear IgA disease antigen homolog is an anchoring filament component involved in dermal-epidermal cohesion. In Bos taurus (Bovine), this protein is Collagen alpha-1(XVII) chain (COL17A1).